The chain runs to 104 residues: Protein MHF2 homolog (104 aa).

Belongs to the CENP-X/MHF2 family.

The protein localises to the nucleus. In terms of biological role, acts in the same pathway as FANCM to restrain class II meiotic crossing over (CO), and acts with FANCM during meiosis to repair interstrand cross-links (ICLs). The chain is Protein MHF2 homolog from Arabidopsis thaliana (Mouse-ear cress).